A 173-amino-acid chain; its full sequence is MDIAIQHPWFKRTLGPFYPSRLFDQFFGEGLFEYDLLPFLSSTISPYYRQSLFRTVLDSGISEVRSDRDKFVIFLDVKHFSPEDLTVKVQEDFVEIHGKHNERQDDHGYISREFHRRYRLPSNVDQTALSCSLSADGMLTFSGPKVPSGLDAGHSERAIPVSREEKPSSAPSS.

Met1 is subject to N-acetylmethionine. Residues 1–63 (MDIAIQHPWF…RTVLDSGISE (63 aa)) are required for complex formation with BFSP1 and BFSP2. Gln6 carries the post-translational modification Deamidated glutamine; partial. Ser45 carries the phosphoserine modification. A Deamidated glutamine; partial modification is found at Gln50. Positions 52–162 (LFRTVLDSGI…GHSERAIPVS (111 aa)) constitute a sHSP domain. Residue Lys70 is modified to N6-acetyllysine. Gln90 carries the post-translational modification Deamidated glutamine; partial. Residue Lys99 is modified to N6-acetyllysine. His100 is a Zn(2+) binding site. Asn101 carries the deamidated asparagine; partial modification. Zn(2+) is bound by residues Glu102 and His107. Residue Ser122 is modified to Phosphoserine. Deamidated asparagine; partial is present on Asn123. A disordered region spans residues 144-173 (PKVPSGLDAGHSERAIPVSREEKPSSAPSS). Positions 153–167 (GHSERAIPVSREEKP) are enriched in basic and acidic residues. His154 lines the Zn(2+) pocket. A glycan (O-linked (GlcNAc) serine) is linked at Ser162.

It belongs to the small heat shock protein (HSP20) family. As to quaternary structure, heteromer composed of three CRYAA and one CRYAB subunits. Inter-subunit bridging via zinc ions enhances stability, which is crucial as there is no protein turn over in the lens. Can also form homodimers and homotetramers (dimers of dimers) which serve as the building blocks of homooligomers. Within homooligomers, the zinc-binding motif is created from residues of 3 different molecules. His-100 and Glu-102 from one molecule are ligands of the zinc ion, and His-107 and His-154 residues from additional molecules complete the site with tetrahedral coordination geometry. Part of a complex required for lens intermediate filament formation composed of BFSP1, BFSP2 and CRYAA. Acetylation at Lys-70 may increase chaperone activity. Post-translationally, undergoes age-dependent proteolytical cleavage at the C-terminus.

It localises to the cytoplasm. Its subcellular location is the nucleus. In terms of biological role, contributes to the transparency and refractive index of the lens. Acts as a chaperone, preventing aggregation of various proteins under a wide range of stress conditions. Required for the correct formation of lens intermediate filaments as part of a complex composed of BFSP1, BFSP2 and CRYAA. This is Alpha-crystallin A chain (CRYAA) from Tapirus indicus (Asiatic tapir).